A 353-amino-acid polypeptide reads, in one-letter code: Methylthioribose-1-phosphate isomerase (353 aa).

Residues 51 to 53 (RGA), arginine 94, and glutamine 203 contribute to the substrate site. Residue aspartate 244 is the Proton donor of the active site. 254–255 (NK) contributes to the substrate binding site.

It belongs to the eIF-2B alpha/beta/delta subunits family. MtnA subfamily.

The catalysed reaction is 5-(methylsulfanyl)-alpha-D-ribose 1-phosphate = 5-(methylsulfanyl)-D-ribulose 1-phosphate. Its pathway is amino-acid biosynthesis; L-methionine biosynthesis via salvage pathway; L-methionine from S-methyl-5-thio-alpha-D-ribose 1-phosphate: step 1/6. In terms of biological role, catalyzes the interconversion of methylthioribose-1-phosphate (MTR-1-P) into methylthioribulose-1-phosphate (MTRu-1-P). The chain is Methylthioribose-1-phosphate isomerase from Trichodesmium erythraeum (strain IMS101).